The primary structure comprises 703 residues: MAIGDRAMFTVLLLFIASISGFSVVRCVTDPSDVQALQVLYTSLNSPSQLTNWKNGGGDPCGESWKGITCEGSAVVTIDISDLGVSGTLGYLLSDLKSLRKLDVSGNSIHDTLPYQLPPNLTSLNLARNNLSGNLPYSISAMGSLSYMNVSGNSLTMSIGDIFADHKSLATLDLSHNNFSGDLPSSLSTVSTLSVLYVQNNQLTGSIDVLSGLPLKTLNVANNHFNGSIPKELSSIQTLIYDGNSFDNVPASPQPERPGKKETPSGSKKPKIGSEEKSSDSGKGLSGGVVTGIVFGSLFVAGIIALVLYLCLHKKKRKVRGSTRASQRSLPLSGTPEVQEQRVKSVASVADLKSSPAEKVTVDRVMKNGSISRIRSPITASQYTVSSLQVATNSFSQENIIGEGSLGRVYRAEFPNGKIMAIKKIDNAALSLQEEDNFLEAVSNMSRLRHPNIVPLAGYCTEHGQRLLVYEYVGNGNLDDTLHTNDDRSMNLTWNARVKVALGTAKALEYLHEVCLPSIVHRNFKSANILLDEELNPHLSDSGLAALTPNTERQVSTQVVGSFGYSAPEFALSGIYTVKSDVYTFGVVMLELLTGRKPLDSSRTRAEQSLVRWATPQLHDIDALSKMVDPSLNGMYPAKSLSRFADIIALCIQPEPEFRPPMSEVVQQLVRLVQRASVVKRRSSDDTGFSYRTPEHEHVDISF.

Residues 1 to 27 (MAIGDRAMFTVLLLFIASISGFSVVRC) form the signal peptide. Residues 28 to 291 (VTDPSDVQAL…GKGLSGGVVT (264 aa)) are Extracellular-facing. 7 LRR repeats span residues 96 to 120 (LKSL…LPPN), 122 to 142 (TSLN…ISAM), 143 to 165 (GSLS…IFAD), 166 to 190 (HKSL…LSTV), 192 to 212 (TLSV…VLSG), 213 to 233 (LPLK…PKEL), and 234 to 256 (SSIQ…PQPE). Asn120, Asn130, Asn149, and Asn178 each carry an N-linked (GlcNAc...) asparagine glycan. Residue Asn226 is glycosylated (N-linked (GlcNAc...) asparagine). The segment at 247 to 284 (DNVPASPQPERPGKKETPSGSKKPKIGSEEKSSDSGKG) is disordered. Residues 292–312 (GIVFGSLFVAGIIALVLYLCL) traverse the membrane as a helical segment. Residues 313–703 (HKKKRKVRGS…PEHEHVDISF (391 aa)) lie on the Cytoplasmic side of the membrane. The region spanning 395–672 (FSQENIIGEG…SEVVQQLVRL (278 aa)) is the Protein kinase domain. Residues 401–409 (IGEGSLGRV) and Lys423 contribute to the ATP site.

The protein belongs to the protein kinase superfamily. Ser/Thr protein kinase family. Expressed in seedlings, roots, stems, leaves, flowers and siliques.

The protein resides in the membrane. The chain is Protein STRUBBELIG-RECEPTOR FAMILY 8 (SRF8) from Arabidopsis thaliana (Mouse-ear cress).